The following is a 349-amino-acid chain: UPF0324 inner membrane protein YeiH (349 aa).

Over 1 to 12 the chain is Periplasmic; that stretch reads MTELTLQNHRRT. The helical transmembrane segment at 13-35 threads the bilayer; the sequence is MWHFIPGLALSAVITGVALWGGA. Residues 36-38 lie on the Cytoplasmic side of the membrane; the sequence is IPA. The chain crosses the membrane as a helical span at residues 39–61; sequence VAGAGFSALTLAILLGMVIGNTV. The Periplasmic portion of the chain corresponds to 62–99; it reads YPQIWKQCDGGVLFAKQHLLRLGIILYGFRLTFSQIAD. Residues 100 to 122 traverse the membrane as a helical segment; sequence VGISGIVIDVLTLSSTFMLACFL. At 123–131 the chain is on the cytoplasmic side; the sequence is GQKVFGLDR. The chain crosses the membrane as a helical span at residues 132 to 151; the sequence is HTSWLIGAGSSICGAAAVLA. At 152-162 the chain is on the periplasmic side; sequence TEPVVKAEASK. The chain crosses the membrane as a helical span at residues 163–185; that stretch reads VTVAVATVVIFGTIAIFLYPAMY. The Cytoplasmic segment spans residues 186-261; it reads PLLAHWFSPE…SPATGAEKSK (76 aa). A helical transmembrane segment spans residues 262–284; that stretch reads ITIPWFAIFFIVVAIFNSFHLLP. Residues 285–290 are Periplasmic-facing; sequence KAVVDM. A helical transmembrane segment spans residues 291 to 313; that stretch reads LVTLDTVLLAMAMAALGLTTHVS. Over 314–322 the chain is Cytoplasmic; sequence ALKKAGAKP. A helical membrane pass occupies residues 323-345; the sequence is LLMALALFAWLIIGGGAINVLIH. At 346–349 the chain is on the periplasmic side; it reads SLIA.

It belongs to the UPF0324 family.

Its subcellular location is the cell inner membrane. This chain is UPF0324 inner membrane protein YeiH (yeiH), found in Salmonella typhi.